Here is a 134-residue protein sequence, read N- to C-terminus: Small ribosomal subunit protein uS8c (134 aa).

The protein belongs to the universal ribosomal protein uS8 family. As to quaternary structure, part of the 30S ribosomal subunit.

Its subcellular location is the plastid. It is found in the chloroplast. One of the primary rRNA binding proteins, it binds directly to 16S rRNA central domain where it helps coordinate assembly of the platform of the 30S subunit. The polypeptide is Small ribosomal subunit protein uS8c (rps8) (Nicotiana tomentosiformis (Tobacco)).